The sequence spans 189 residues: Transcription factor FapR (189 aa).

Belongs to the FapR family.

Transcriptional factor involved in regulation of membrane lipid biosynthesis by repressing genes involved in fatty acid and phospholipid metabolism. The chain is Transcription factor FapR from Listeria monocytogenes serotype 4b (strain CLIP80459).